The following is a 329-amino-acid chain: Acetyl-coenzyme A carboxylase carboxyl transferase subunit alpha (329 aa).

Positions 40 to 294 (QLETLAARRR…KESLIRNLRE (255 aa)) constitute a CoA carboxyltransferase C-terminal domain.

It belongs to the AccA family. As to quaternary structure, acetyl-CoA carboxylase is a heterohexamer composed of biotin carboxyl carrier protein (AccB), biotin carboxylase (AccC) and two subunits each of ACCase subunit alpha (AccA) and ACCase subunit beta (AccD).

It localises to the cytoplasm. The enzyme catalyses N(6)-carboxybiotinyl-L-lysyl-[protein] + acetyl-CoA = N(6)-biotinyl-L-lysyl-[protein] + malonyl-CoA. It functions in the pathway lipid metabolism; malonyl-CoA biosynthesis; malonyl-CoA from acetyl-CoA: step 1/1. Component of the acetyl coenzyme A carboxylase (ACC) complex. First, biotin carboxylase catalyzes the carboxylation of biotin on its carrier protein (BCCP) and then the CO(2) group is transferred by the carboxyltransferase to acetyl-CoA to form malonyl-CoA. This is Acetyl-coenzyme A carboxylase carboxyl transferase subunit alpha from Prochlorococcus marinus (strain MIT 9211).